A 126-amino-acid polypeptide reads, in one-letter code: Small ribosomal subunit protein uS13 (126 aa).

Positions 95–126 are disordered; the sequence is GLPVRGQRTRTNARTRKGPRKTVAGKKKAPRK.

Belongs to the universal ribosomal protein uS13 family. Part of the 30S ribosomal subunit. Forms a loose heterodimer with protein S19. Forms two bridges to the 50S subunit in the 70S ribosome.

In terms of biological role, located at the top of the head of the 30S subunit, it contacts several helices of the 16S rRNA. In the 70S ribosome it contacts the 23S rRNA (bridge B1a) and protein L5 of the 50S subunit (bridge B1b), connecting the 2 subunits; these bridges are implicated in subunit movement. Contacts the tRNAs in the A and P-sites. The chain is Small ribosomal subunit protein uS13 (rpsM) from Thermus thermophilus (strain ATCC BAA-163 / DSM 7039 / HB27).